We begin with the raw amino-acid sequence, 314 residues long: Diisopropyl-fluorophosphatase (314 aa).

Residues glutamate 21, asparagine 120, asparagine 175, aspartate 229, aspartate 232, leucine 273, and histidine 274 each coordinate Ca(2+). Histidine 287 (proton acceptor) is an active-site residue.

Monomer. Ca(2+) serves as cofactor.

It catalyses the reaction diisopropyl fluorophosphate + H2O = diisopropyl phosphate + fluoride + 2 H(+). Its activity is regulated as follows. Inhibited by chelating agents. Functionally, biological function and substrate unknown. However, it is capable of acting on phosphorus anhydride bonds (such as phosphorus-halide and phosphorus-cyanide) in organophosphorus compounds (including nerve gases). This is Diisopropyl-fluorophosphatase from Loligo vulgaris (Common European squid).